We begin with the raw amino-acid sequence, 434 residues long: Glutamyl-tRNA reductase (434 aa).

Substrate-binding positions include 49 to 52, serine 109, 114 to 116, and glutamine 120; these read TCNR and EPQ. Residue cysteine 50 is the Nucleophile of the active site. An NADP(+)-binding site is contributed by 189 to 194; it reads GAGEMC.

The protein belongs to the glutamyl-tRNA reductase family. As to quaternary structure, homodimer.

The enzyme catalyses (S)-4-amino-5-oxopentanoate + tRNA(Glu) + NADP(+) = L-glutamyl-tRNA(Glu) + NADPH + H(+). Its pathway is porphyrin-containing compound metabolism; protoporphyrin-IX biosynthesis; 5-aminolevulinate from L-glutamyl-tRNA(Glu): step 1/2. Catalyzes the NADPH-dependent reduction of glutamyl-tRNA(Glu) to glutamate 1-semialdehyde (GSA). The sequence is that of Glutamyl-tRNA reductase from Geobacter sulfurreducens (strain ATCC 51573 / DSM 12127 / PCA).